Consider the following 481-residue polypeptide: FAD-linked oxidoreductase afoF (481 aa).

The first 16 residues, 1–16, serve as a signal peptide directing secretion; that stretch reads MRFLLQSITLVAAARA. One can recognise an FAD-binding PCMH-type domain in the interval 52–227; sequence SEWRPPTWTG…TAATFKMFDQ (176 aa). An N-linked (GlcNAc...) asparagine glycan is attached at Asn-82. His-92 carries the pros-8alpha-FAD histidine modification. N-linked (GlcNAc...) asparagine glycans are attached at residues Asn-196, Asn-241, Asn-276, Asn-309, Asn-312, and Asn-376.

Belongs to the oxygen-dependent FAD-linked oxidoreductase family. FAD is required as a cofactor.

Its function is as follows. FAD-linked oxidoreductase; part of the gene cluster that mediates the biosynthesis of asperfuranone, a probable antitumor agent. The polyketide synthase afoG is responsible for producing the 3,5-dimethyloctadienone moiety from acetyl-CoA, three malonyl-CoA, and two S-adenosyl methionines (SAM). The 3,5-dimethyloctadienone moiety is then loaded onto the SAT domain of afoE and extended with four malonyl-CoA and one SAM, which leads to the formation of 2,4-dihydroxy-6-(5,7-dimethyl-2-oxo-trans-3-trans-5-nonadienyl)-3-methylbenzaldehyde (compound 2) after reductive release and aldol condensation. AfoD is the next enzyme in the biosynthesis sequence and hydroxylates the side chain at the benzylic position of compound 2. After benzylic hydroxylation, a furan ring is formed after five-member ring hemiacetal formation and water elimination. AfoF and afoC are proposed to oxidize the R-diketone proton and to reduce the unconjugated carbonyl group, respectively, to generate asperfuranone. Since no intermediates could be isolated from afoF and afoC deletants, the sequence of these two enzymes is not fully understood. Moreover, since afoC deletant still produces a small amount of asperfuranone, other endogenous oxidoreductases might catalyze the same reaction with much less efficiency. The protein is FAD-linked oxidoreductase afoF of Emericella nidulans (strain FGSC A4 / ATCC 38163 / CBS 112.46 / NRRL 194 / M139) (Aspergillus nidulans).